The primary structure comprises 104 residues: MTNRLALSGTVCRAPLRKVSPSGIPHCQFVLEHRSVQEEAGFHRQAWCQMPVIVSGHENQAITHSITVGSRITVQGFISCHKAKNGLSKMVLHAEQIELIDSGD.

The SSB domain maps to 1 to 101 (MTNRLALSGT…LHAEQIELID (101 aa)).

Belongs to the PriB family. Homodimer. Interacts with PriA and DnaT. Component of the replication restart primosome. Primosome assembly occurs via a 'hand-off' mechanism. PriA binds to replication forks, subsequently PriB then DnaT bind; DnaT then displaces ssDNA to generate the helicase loading substrate.

Its function is as follows. Involved in the restart of stalled replication forks, which reloads the replicative helicase on sites other than the origin of replication; the PriA-PriB pathway is the major replication restart pathway. During primosome assembly it facilitates complex formation between PriA and DnaT on DNA; stabilizes PriA on DNA. Stimulates the DNA unwinding activity of PriA helicase. The protein is Replication restart protein PriB of Salmonella agona (strain SL483).